The sequence spans 414 residues: Dual-specificity RNA methyltransferase RlmN (414 aa).

The segment covering 1-13 (MTSAVGISVPNTD) has biased composition (polar residues). The interval 1-22 (MTSAVGISVPNTDAQSSQSASQ) is disordered. Residue Glu-124 is the Proton acceptor of the active site. A Radical SAM core domain is found at 134–377 (TGSRKTLCIS…CTIRQTRGDD (244 aa)). Cys-141 and Cys-382 form a disulfide bridge. Positions 148, 152, and 155 each coordinate [4Fe-4S] cluster. S-adenosyl-L-methionine is bound by residues 204 to 205 (GE), Ser-236, 258 to 260 (SLH), and Asn-339. Cys-382 (S-methylcysteine intermediate) is an active-site residue.

It belongs to the radical SAM superfamily. RlmN family. It depends on [4Fe-4S] cluster as a cofactor.

It is found in the cytoplasm. It carries out the reaction adenosine(2503) in 23S rRNA + 2 reduced [2Fe-2S]-[ferredoxin] + 2 S-adenosyl-L-methionine = 2-methyladenosine(2503) in 23S rRNA + 5'-deoxyadenosine + L-methionine + 2 oxidized [2Fe-2S]-[ferredoxin] + S-adenosyl-L-homocysteine. The catalysed reaction is adenosine(37) in tRNA + 2 reduced [2Fe-2S]-[ferredoxin] + 2 S-adenosyl-L-methionine = 2-methyladenosine(37) in tRNA + 5'-deoxyadenosine + L-methionine + 2 oxidized [2Fe-2S]-[ferredoxin] + S-adenosyl-L-homocysteine. Specifically methylates position 2 of adenine 2503 in 23S rRNA and position 2 of adenine 37 in tRNAs. m2A2503 modification seems to play a crucial role in the proofreading step occurring at the peptidyl transferase center and thus would serve to optimize ribosomal fidelity. The protein is Dual-specificity RNA methyltransferase RlmN of Acinetobacter baylyi (strain ATCC 33305 / BD413 / ADP1).